A 340-amino-acid chain; its full sequence is UDP-N-acetylglucosamine--N-acetylmuramyl-(pentapeptide) pyrophosphoryl-undecaprenol N-acetylglucosamine transferase (340 aa).

Residues 10 to 12 (TGG), asparagine 124, serine 179, and glutamine 277 each bind UDP-N-acetyl-alpha-D-glucosamine.

It belongs to the glycosyltransferase 28 family. MurG subfamily.

The protein localises to the cell inner membrane. It carries out the reaction di-trans,octa-cis-undecaprenyl diphospho-N-acetyl-alpha-D-muramoyl-L-alanyl-D-glutamyl-meso-2,6-diaminopimeloyl-D-alanyl-D-alanine + UDP-N-acetyl-alpha-D-glucosamine = di-trans,octa-cis-undecaprenyl diphospho-[N-acetyl-alpha-D-glucosaminyl-(1-&gt;4)]-N-acetyl-alpha-D-muramoyl-L-alanyl-D-glutamyl-meso-2,6-diaminopimeloyl-D-alanyl-D-alanine + UDP + H(+). It participates in cell wall biogenesis; peptidoglycan biosynthesis. Cell wall formation. Catalyzes the transfer of a GlcNAc subunit on undecaprenyl-pyrophosphoryl-MurNAc-pentapeptide (lipid intermediate I) to form undecaprenyl-pyrophosphoryl-MurNAc-(pentapeptide)GlcNAc (lipid intermediate II). The sequence is that of UDP-N-acetylglucosamine--N-acetylmuramyl-(pentapeptide) pyrophosphoryl-undecaprenol N-acetylglucosamine transferase from Sulfurimonas denitrificans (strain ATCC 33889 / DSM 1251) (Thiomicrospira denitrificans (strain ATCC 33889 / DSM 1251)).